Here is a 310-residue protein sequence, read N- to C-terminus: Ribosomal RNA small subunit methyltransferase H (310 aa).

S-adenosyl-L-methionine contacts are provided by residues 32-34 (AGH), aspartate 51, phenylalanine 84, aspartate 102, and glutamine 109.

The protein belongs to the methyltransferase superfamily. RsmH family.

The protein resides in the cytoplasm. It carries out the reaction cytidine(1402) in 16S rRNA + S-adenosyl-L-methionine = N(4)-methylcytidine(1402) in 16S rRNA + S-adenosyl-L-homocysteine + H(+). In terms of biological role, specifically methylates the N4 position of cytidine in position 1402 (C1402) of 16S rRNA. This Campylobacter hominis (strain ATCC BAA-381 / DSM 21671 / CCUG 45161 / LMG 19568 / NCTC 13146 / CH001A) protein is Ribosomal RNA small subunit methyltransferase H.